The chain runs to 353 residues: UDP-N-acetylglucosamine--N-acetylmuramyl-(pentapeptide) pyrophosphoryl-undecaprenol N-acetylglucosamine transferase (353 aa).

UDP-N-acetyl-alpha-D-glucosamine-binding positions include 11 to 13 (SAG), R164, S194, and Q289.

The protein belongs to the glycosyltransferase 28 family. MurG subfamily.

The protein resides in the cell membrane. The catalysed reaction is di-trans,octa-cis-undecaprenyl diphospho-N-acetyl-alpha-D-muramoyl-L-alanyl-D-glutamyl-meso-2,6-diaminopimeloyl-D-alanyl-D-alanine + UDP-N-acetyl-alpha-D-glucosamine = di-trans,octa-cis-undecaprenyl diphospho-[N-acetyl-alpha-D-glucosaminyl-(1-&gt;4)]-N-acetyl-alpha-D-muramoyl-L-alanyl-D-glutamyl-meso-2,6-diaminopimeloyl-D-alanyl-D-alanine + UDP + H(+). It functions in the pathway cell wall biogenesis; peptidoglycan biosynthesis. Functionally, cell wall formation. Catalyzes the transfer of a GlcNAc subunit on undecaprenyl-pyrophosphoryl-MurNAc-pentapeptide (lipid intermediate I) to form undecaprenyl-pyrophosphoryl-MurNAc-(pentapeptide)GlcNAc (lipid intermediate II). The sequence is that of UDP-N-acetylglucosamine--N-acetylmuramyl-(pentapeptide) pyrophosphoryl-undecaprenol N-acetylglucosamine transferase from Clostridium kluyveri (strain ATCC 8527 / DSM 555 / NBRC 12016 / NCIMB 10680 / K1).